The primary structure comprises 419 residues: Dual specificity mitogen-activated protein kinase kinase 7 (419 aa).

An N-acetylalanine modification is found at Ala2. Positions 2 to 30 (AASSLEQKLSRLEAKLKQENREARRRIDL) form a coiled coil. Over residues 18–30 (KQENREARRRIDL) the composition is skewed to basic and acidic residues. The disordered stretch occupies residues 18–76 (KQENREARRRIDLNLDISPQRPRPTLQLPLANDGGSRSPSSESSPQHPTPPARPRHMLG). Over residues 36–63 (PQRPRPTLQLPLANDGGSRSPSSESSPQ) the composition is skewed to low complexity. Residues 37-57 (QRPRPTLQLPLANDGGSRSPS) form a d domain region. Residues 120 to 380 (LENLGEMGSG…YNKLLEHSFI (261 aa)) enclose the Protein kinase domain. ATP is bound by residues 126-134 (MGSGTCGQV) and Lys149. The active-site Proton acceptor is Asp243. Ser271 carries the post-translational modification Phosphoserine; by MAP3K. Thr275 is subject to Phosphothreonine; by MAP3K. The interval 377–400 (HSFIKRYETLEVDVASWFKDVMAK) is DVD domain. The residue at position 411 (Ser411) is a Phosphoserine.

The protein belongs to the protein kinase superfamily. STE Ser/Thr protein kinase family. MAP kinase kinase subfamily. In terms of assembly, interacts with isoform 1 of VRK2. Interacts (via its D domain) with its substrates MAPK8/JNK1, MAPK9/JNK2 and MAPK10/JNK3. Interacts (via its DVD domain) with MAP3Ks activators like MAP3K5/ASK1 and MAP3K1/MEKK1. Interacts with MAPK8IP1/JIP1, MAPK8IP2/JIP2 and MAPK8IP3/JIP3 scaffold proteins. Interacts with RASSF7, the interaction promotes phosphorylation. Found in a complex with SH3RF1, RAC1, MAP3K11/MLK3, MAPK8IP1/JIP1 and MAPK8/JNK1. Found in a complex with SH3RF1, RAC2, MAP3K7/TAK1, MAPK8IP1/JIP1, MAPK8/JNK1 and MAPK9/JNK2. Requires Mg(2+) as cofactor. Post-translationally, activated by phosphorylation on Ser-271 and Thr-275 by MAP kinase kinase kinases (MAP3Ks). In terms of tissue distribution, ubiquitous; with highest level of expression in skeletal muscle. Isoform 3 is found at low levels in placenta, fetal liver, and skeletal muscle.

The protein resides in the nucleus. Its subcellular location is the cytoplasm. The enzyme catalyses L-seryl-[protein] + ATP = O-phospho-L-seryl-[protein] + ADP + H(+). It catalyses the reaction L-threonyl-[protein] + ATP = O-phospho-L-threonyl-[protein] + ADP + H(+). It carries out the reaction L-tyrosyl-[protein] + ATP = O-phospho-L-tyrosyl-[protein] + ADP + H(+). Its activity is regulated as follows. Activated by phosphorylation by specific MAP kinase kinase kinases such as MAP3K1/MEKK1, MAP3K3/MEKK3, MAP3K11/MLK3 and MAP3K12/DLK. Its function is as follows. Dual specificity protein kinase which acts as an essential component of the MAP kinase signal transduction pathway. Essential component of the stress-activated protein kinase/c-Jun N-terminal kinase (SAP/JNK) signaling pathway. With MAP2K4/MKK4, is the one of the only known kinase to directly activate the stress-activated protein kinase/c-Jun N-terminal kinases MAPK8/JNK1, MAPK9/JNK2 and MAPK10/JNK3. MAP2K4/MKK4 and MAP2K7/MKK7 both activate the JNKs by phosphorylation, but they differ in their preference for the phosphorylation site in the Thr-Pro-Tyr motif. MAP2K4/MKK4 shows preference for phosphorylation of the Tyr residue and MAP2K7/MKK7 for the Thr residue. The monophosphorylation of JNKs on the Thr residue is sufficient to increase JNK activity indicating that MAP2K7/MKK7 is important to trigger JNK activity, while the additional phosphorylation of the Tyr residue by MAP2K4/MKK4 ensures optimal JNK activation. Has a specific role in JNK signal transduction pathway activated by pro-inflammatory cytokines. The MKK/JNK signaling pathway is also involved in mitochondrial death signaling pathway, including the release cytochrome c, leading to apoptosis. Part of a non-canonical MAPK signaling pathway, composed of the upstream MAP3K12 kinase and downstream MAP kinases MAPK1/ERK2 and MAPK3/ERK1, that enhances the AP-1-mediated transcription of APP in response to APOE. In Homo sapiens (Human), this protein is Dual specificity mitogen-activated protein kinase kinase 7 (MAP2K7).